A 436-amino-acid chain; its full sequence is NAD(P)-dependent benzaldehyde dehydrogenase (436 aa).

NADP(+)-binding positions include 117-119, 143-147, 175-178, 193-194, 215-216, Cys249, and 337-339; these read GPF, KPSET, RDEN, GS, EL, and ELF. Catalysis depends on residues Glu215 and Cys249.

Belongs to the aldehyde dehydrogenase family.

The catalysed reaction is benzaldehyde + NAD(+) + H2O = benzoate + NADH + 2 H(+). The enzyme catalyses benzaldehyde + NADP(+) + H2O = benzoate + NADPH + 2 H(+). The protein operates within aromatic compound metabolism; (R)-mandelate degradation; benzoate from (R)-mandelate: step 4/4. Functionally, NAD or NADP-dependent benzaldehyde dehydrogenase that catalyzes the conversion of benzaldehyde into benzoate in the (R)-mandelate degradation pathway. The chain is NAD(P)-dependent benzaldehyde dehydrogenase (mdlD) from Pseudomonas putida (Arthrobacter siderocapsulatus).